A 768-amino-acid polypeptide reads, in one-letter code: DNA ligase (768 aa).

Residues 61-65 (DAEFD), 110-111 (SL), and Glu146 each bind NAD(+). Lys148 serves as the catalytic N6-AMP-lysine intermediate. NAD(+) is bound by residues Arg169, Glu206, Lys322, and Lys346. Zn(2+) contacts are provided by Cys443, Cys446, Cys462, and Cys468. Residues 661–750 (SVPRTLEGLT…PAQTGTEAEA (90 aa)) form the BRCT domain. A disordered region spans residues 739 to 768 (NGPAQTGTEAEAATDEATVVDETAAEAATE). Positions 746-768 (TEAEAATDEATVVDETAAEAATE) are enriched in low complexity.

The protein belongs to the NAD-dependent DNA ligase family. LigA subfamily. Requires Mg(2+) as cofactor. It depends on Mn(2+) as a cofactor.

The enzyme catalyses NAD(+) + (deoxyribonucleotide)n-3'-hydroxyl + 5'-phospho-(deoxyribonucleotide)m = (deoxyribonucleotide)n+m + AMP + beta-nicotinamide D-nucleotide.. Functionally, DNA ligase that catalyzes the formation of phosphodiester linkages between 5'-phosphoryl and 3'-hydroxyl groups in double-stranded DNA using NAD as a coenzyme and as the energy source for the reaction. It is essential for DNA replication and repair of damaged DNA. In Paenarthrobacter aurescens (strain TC1), this protein is DNA ligase.